The following is a 498-amino-acid chain: Pentatricopeptide repeat-containing protein At2g15980 (498 aa).

7 PPR repeats span residues 244–274 (NATT…MEEE), 280–314 (NVYS…GVVY), 315–349 (DIVA…GIEC), 350–384 (TCLT…GFEA), 385–423 (DGLT…MFYP), 424–458 (SRNC…GFKP), and 459–489 (SQET…MAES).

It belongs to the PPR family. P subfamily.

This is Pentatricopeptide repeat-containing protein At2g15980 from Arabidopsis thaliana (Mouse-ear cress).